The following is a 333-amino-acid chain: G-protein coupled receptor 146 (333 aa).

The Extracellular segment spans residues 1–21; the sequence is MWSCEDLNYTNSGEEQYLCNE. N8 carries N-linked (GlcNAc...) asparagine glycosylation. A helical transmembrane segment spans residues 22–42; it reads FHLFLFIFSVLYLIICFPVGL. The Cytoplasmic segment spans residues 43 to 65; it reads CYNVQLVLVNLYNKATMTMPDVY. The chain crosses the membrane as a helical span at residues 66 to 86; it reads FVNMAIAGLIINAVAPVYLFG. Residues 87–102 are Extracellular-facing; that stretch reads PAYTKWSLWSFGNEVY. A helical transmembrane segment spans residues 103–123; the sequence is ITLLILFNVSSLVIMYSTTLL. At 124–146 the chain is on the cytoplasmic side; it reads SLDYYIECALPRTYMSSVYNTKH. Residues 147–167 traverse the membrane as a helical segment; that stretch reads VCGFIWGGAVLTSFSSLLFYI. At 168 to 189 the chain is on the extracellular side; sequence CNHVSTKIIECSKMQNREAADA. The chain crosses the membrane as a helical span at residues 190–210; that stretch reads IMVLIGYVVPIIAVIYALVLI. Residues 211 to 234 are Cytoplasmic-facing; that stretch reads LQIRKEATPLDQESGRLDPSVHRL. A helical membrane pass occupies residues 235–255; that stretch reads LIATVCTQFILWTPYYVTLLV. Over 256 to 275 the chain is Extracellular; that stretch reads NTFMDARVKSSNTFYIRIFQ. Residues 276 to 296 traverse the membrane as a helical segment; the sequence is FTEGLSNFLAFSSSFVLPLIH. The Cytoplasmic portion of the chain corresponds to 297–333; it reads RHINKNFSGKLQRLLKRLHCGSQGCTHEHTVVQQVMT.

The protein belongs to the G-protein coupled receptor 1 family.

The protein resides in the cell membrane. In terms of biological role, G-protein coupled receptor required for the regulation of plasma cholesterol levels. This is G-protein coupled receptor 146 (gpr146) from Xenopus laevis (African clawed frog).